A 258-amino-acid polypeptide reads, in one-letter code: 5-oxoprolinase subunit A (258 aa).

It belongs to the LamB/PxpA family. Forms a complex composed of PxpA, PxpB and PxpC.

The catalysed reaction is 5-oxo-L-proline + ATP + 2 H2O = L-glutamate + ADP + phosphate + H(+). Its function is as follows. Catalyzes the cleavage of 5-oxoproline to form L-glutamate coupled to the hydrolysis of ATP to ADP and inorganic phosphate. The sequence is that of 5-oxoprolinase subunit A from Deinococcus radiodurans (strain ATCC 13939 / DSM 20539 / JCM 16871 / CCUG 27074 / LMG 4051 / NBRC 15346 / NCIMB 9279 / VKM B-1422 / R1).